Reading from the N-terminus, the 170-residue chain is NADH-ubiquinone oxidoreductase chain 6 (170 aa).

The next 5 helical transmembrane spans lie at 1–21 (MIYMVSVSMMVLVLGLVAVAS), 26–46 (FYAALGLVLAAGAGCLVIVSF), 49–69 (SFLSIVLFLIYLGGMLVVFAY), 86–106 (VVFYVLVYLIGVLVWYLFLGG), and 138–158 (WVIIVYWWVSIIINFVCGIWV).

It belongs to the complex I subunit 6 family. As to quaternary structure, core subunit of respiratory chain NADH dehydrogenase (Complex I) which is composed of 45 different subunits.

It localises to the mitochondrion inner membrane. The enzyme catalyses a ubiquinone + NADH + 5 H(+)(in) = a ubiquinol + NAD(+) + 4 H(+)(out). Functionally, core subunit of the mitochondrial membrane respiratory chain NADH dehydrogenase (Complex I) which catalyzes electron transfer from NADH through the respiratory chain, using ubiquinone as an electron acceptor. Essential for the catalytic activity and assembly of complex I. The protein is NADH-ubiquinone oxidoreductase chain 6 (mt-nd6) of Xenopus laevis (African clawed frog).